Reading from the N-terminus, the 318-residue chain is Gamma-glutamyl hydrolase (318 aa).

The signal sequence occupies residues 1–24 (MARLGRLLSVLGLVLCGATGLGLS). One can recognise a Gamma-glutamyl hydrolase domain in the interval 25–318 (APPAPTPKKP…SSFQQSYIFD (294 aa)). An N-linked (GlcNAc...) asparagine glycan is attached at asparagine 116. Cysteine 134 functions as the Nucleophile in the catalytic mechanism. N-linked (GlcNAc...) asparagine glycosylation is found at asparagine 163 and asparagine 203. Histidine 244 functions as the Proton donor in the catalytic mechanism. An N-linked (GlcNAc...) asparagine glycan is attached at asparagine 307.

It belongs to the peptidase C26 family. As to quaternary structure, homodimer.

The protein resides in the secreted. Its subcellular location is the extracellular space. The protein localises to the lysosome. It localises to the melanosome. It catalyses the reaction (6S)-5,6,7,8-tetrahydrofolyl-(gamma-L-Glu)(n) + (n-1) H2O = (6S)-5,6,7,8-tetrahydrofolate + (n-1) L-glutamate. Hydrolyzes the polyglutamate sidechains of pteroylpolyglutamates. Progressively removes gamma-glutamyl residues from pteroylpoly-gamma-glutamate to yield pteroyl-alpha-glutamate (folic acid) and free glutamate. May play an important role in the bioavailability of dietary pteroylpolyglutamates and in the metabolism of pteroylpolyglutamates and antifolates. Exhibits either endo- or exopeptidase activity depending upon the tissue of origin. When secreted, it acts primarily as an endopeptidase. This Bos taurus (Bovine) protein is Gamma-glutamyl hydrolase (GGH).